A 404-amino-acid chain; its full sequence is Acetate kinase (404 aa).

N7 is a binding site for Mg(2+). K14 provides a ligand contact to ATP. R95 contacts substrate. Residue D152 is the Proton donor/acceptor of the active site. ATP is bound by residues 212–216, 286–288, and 334–338; these read HLGNG, DMR, and GIGEN. E388 is a binding site for Mg(2+).

This sequence belongs to the acetokinase family. As to quaternary structure, homodimer. Mg(2+) is required as a cofactor. Requires Mn(2+) as cofactor.

Its subcellular location is the cytoplasm. The enzyme catalyses acetate + ATP = acetyl phosphate + ADP. Its pathway is metabolic intermediate biosynthesis; acetyl-CoA biosynthesis; acetyl-CoA from acetate: step 1/2. Functionally, catalyzes the formation of acetyl phosphate from acetate and ATP. Can also catalyze the reverse reaction. The polypeptide is Acetate kinase (Lawsonia intracellularis (strain PHE/MN1-00)).